The chain runs to 336 residues: Casein kinase I isoform beta (336 aa).

The Protein kinase domain occupies 17–285; that stretch reads YKLVREIGFG…YLRQLFRLLF (269 aa). Residues 23-31 and Lys-46 each bind ATP; that span reads IGFGSFGHV. Residue Asp-136 is the Proton acceptor of the active site. Residues 309 to 320 show a composition bias toward low complexity; it reads ASSSSGEGQQAQ. Positions 309–336 are disordered; that stretch reads ASSSSGEGQQAQTPTGKSDNTKSEMKHS. Residues 327-336 are compositionally biased toward basic and acidic residues; that stretch reads DNTKSEMKHS.

The protein belongs to the protein kinase superfamily. CK1 Ser/Thr protein kinase family. Casein kinase I subfamily. Monomer.

The protein localises to the cytoplasm. It catalyses the reaction L-seryl-[protein] + ATP = O-phospho-L-seryl-[protein] + ADP + H(+). It carries out the reaction L-threonyl-[protein] + ATP = O-phospho-L-threonyl-[protein] + ADP + H(+). Casein kinases are operationally defined by their preferential utilization of acidic proteins such as caseins as substrates. It can phosphorylate a large number of proteins. Participates in Wnt signaling. This is Casein kinase I isoform beta (CSNK1B) from Bos taurus (Bovine).